We begin with the raw amino-acid sequence, 435 residues long: Eukaryotic peptide chain release factor subunit 1-2 (435 aa).

Ala2 is subject to N-acetylalanine.

This sequence belongs to the eukaryotic release factor 1 family. Heterodimer of two subunits, one of which binds GTP. Interacts with OR.

It localises to the cytoplasm. Its function is as follows. Directs the termination of nascent peptide synthesis (translation) in response to the termination codons UAA, UAG and UGA. Modulates plant growth and development. This chain is Eukaryotic peptide chain release factor subunit 1-2, found in Brassica oleracea var. botrytis (Cauliflower).